The primary structure comprises 584 residues: Proteasome-associated ATPase (584 aa).

A coiled-coil region spans residues 16–91 (EELASQVRLL…KEEVDRLAQP (76 aa)). 273-278 (GCGKTL) provides a ligand contact to ATP. A docks into pockets in the proteasome alpha-ring region spans residues 583 to 584 (YL).

This sequence belongs to the AAA ATPase family. As to quaternary structure, homohexamer. Assembles into a hexameric ring structure that caps the 20S proteasome core. Strongly interacts with the prokaryotic ubiquitin-like protein Pup through a hydrophobic interface; the interacting region of ARC lies in its N-terminal coiled-coil domain. There is one Pup binding site per ARC hexamer ring. Upon ATP-binding, the C-terminus of ARC interacts with the alpha-rings of the proteasome core, possibly by binding to the intersubunit pockets.

It functions in the pathway protein degradation; proteasomal Pup-dependent pathway. In terms of biological role, ATPase which is responsible for recognizing, binding, unfolding and translocation of pupylated proteins into the bacterial 20S proteasome core particle. May be essential for opening the gate of the 20S proteasome via an interaction with its C-terminus, thereby allowing substrate entry and access to the site of proteolysis. Thus, the C-termini of the proteasomal ATPase may function like a 'key in a lock' to induce gate opening and therefore regulate proteolysis. The protein is Proteasome-associated ATPase of Nocardioides sp. (strain ATCC BAA-499 / JS614).